Consider the following 1273-residue polypeptide: Kinesin-like protein KIN-14A (1273 aa).

The disordered stretch occupies residues 1–52 (MADQRSKTNRWNWEVSGFEPRKSSSNASFAESTGHRTTGPLLRRNSISTPSL). The stretch at 59–89 (ASKVNGLKEKVKLAKEDYLELRQEATDLQEY) forms a coiled coil. The region spanning 142–456 (NIKVFCRARP…LNYAARARNT (315 aa)) is the Kinesin motor domain. 223–230 (GQTNAGKT) is an ATP binding site. 3 coiled-coil regions span residues 466-511 (IKKW…CVLL), 559-595 (QLDQ…AVRS), and 627-657 (TKKL…RLTE). Disordered stretches follow at residues 827-847 (KPNT…RSPV) and 1136-1157 (QEDT…SISS). Positions 830–846 (TGRSKSTSRGSSPGRSP) are enriched in low complexity.

This sequence belongs to the TRAFAC class myosin-kinesin ATPase superfamily. Kinesin family. KIN-14 subfamily. As to quaternary structure, homodimer and heterodimer with KCA2. Interacts with CDKA-1. Interacts with AL1, a geminivirus (TGMV) protein essential for viral replication. Interacts with LUE1/KSS. In terms of processing, part of the phosphorylation is not CDK-dependent. Widely expressed.

Its subcellular location is the nucleus. The protein resides in the cytoplasm. It is found in the cytoskeleton. The protein localises to the spindle. It localises to the chromosome. Its subcellular location is the cell membrane. The protein resides in the phragmoplast. Functionally, kinesin-like protein required for chloroplast movements and anchor to the plasma membrane. Mediates chloroplast movement via chloroplast actin (cp-actin) filaments. Required for the chloroplast avoidance response under high intensity blue light. Mediates redundantly with CHUP1 the nuclear avoidance response under high intensity blue light. May act as a mitotic kinesin. Probably involved in division plane determination. The sequence is that of Kinesin-like protein KIN-14A from Arabidopsis thaliana (Mouse-ear cress).